Reading from the N-terminus, the 334-residue chain is Phosphoribosylformylglycinamidine cyclo-ligase (334 aa).

This sequence belongs to the AIR synthase family.

The protein localises to the cytoplasm. It catalyses the reaction 2-formamido-N(1)-(5-O-phospho-beta-D-ribosyl)acetamidine + ATP = 5-amino-1-(5-phospho-beta-D-ribosyl)imidazole + ADP + phosphate + H(+). It participates in purine metabolism; IMP biosynthesis via de novo pathway; 5-amino-1-(5-phospho-D-ribosyl)imidazole from N(2)-formyl-N(1)-(5-phospho-D-ribosyl)glycinamide: step 2/2. The protein is Phosphoribosylformylglycinamidine cyclo-ligase of Pyrococcus furiosus (strain ATCC 43587 / DSM 3638 / JCM 8422 / Vc1).